Reading from the N-terminus, the 450-residue chain is Magnesium transporter MgtE (450 aa).

The Cytoplasmic segment spans residues 1 to 283; the sequence is MEEKLAVSLQ…SEAGPVALWL (283 aa). Mg(2+) contacts are provided by Glu-59, Asp-91, Asp-95, and Gly-136. 2 CBS domains span residues 138 to 200 and 202 to 258; these read MTPE…RVAE and MNPK…EATE. 5 residues coordinate ATP: Tyr-170, Ser-185, Arg-187, Asp-188, and Val-207. Glu-216, Ala-223, Asp-226, Asp-247, Asp-250, Glu-255, Glu-258, and Asp-259 together coordinate Mg(2+). Glu-275 contacts Ca(2+). Mn(2+) contacts are provided by Glu-275, Gln-304, Glu-307, and Glu-311. Residues 284–306 traverse the membrane as a helical segment; the sequence is ARVRWLVILILTGMVTSSILQGF. Residues 307–315 lie on the Periplasmic side of the membrane; the sequence is ESVLEAVTA. Glu-311 contributes to the Ca(2+) binding site. A helical membrane pass occupies residues 316-337; it reads LAFYVPVLLGTGGNTGNQSATL. Residues 338–351 lie on the Cytoplasmic side of the membrane; that stretch reads IIRALATRDLDLRD. The helical transmembrane segment at 352–381 threads the bilayer; it reads WRRVFLKEMGVGLLLGLTLSFLLVGKVYWD. Over 382-385 the chain is Periplasmic; that stretch reads GHPL. Mn(2+) is bound at residue His-383. Residues 386 to 409 form a helical membrane-spanning segment; sequence LLPVVGVSLVLIVFFANLVGAMLP. Over 410–420 the chain is Cytoplasmic; that stretch reads FLLRRLGVDPA. Mg(2+) contacts are provided by Asp-418, Ala-428, and Asp-432. The chain crosses the membrane as a helical span at residues 421–443; that stretch reads LVSNPLVATLSDVTGLLIYLSVA. The Periplasmic segment spans residues 444–450; sequence RLLLEAV.

It belongs to the SLC41A transporter family. In terms of assembly, homodimer.

Its subcellular location is the cell inner membrane. The enzyme catalyses Mg(2+)(in) = Mg(2+)(out). With respect to regulation, the channel activity is regulated via the N-terminal cytoplasmic region, which acts as a Mg(2+) sensor to regulate the gating of the ion-conducting pore in response to the intracellular magnesium concentration. Under high-intracellular magnesium conditions, binding of magnesium to the N-terminal cytoplasmic domain stabilizes the closed conformation of the channel. Under low-intracellular magnesium conditions, the channel is in equilibrium between the open and closed states. A cation-binding site within the membrane (M1) strictly recognizes the size and geometry of the Mg(2+) hydration shells, which may be important for the selective transport of Mg(2+) over other cations. Cation-binding sites on the periplasmic side (M2 and M3) regulate channel opening and prevent conduction of near-cognate cations. Binding of Mn(2+) to the periplasmic sites strongly inhibits the Mg(2+) transport activity. In addition, activity is regulated by ATP, which binds to MgtE and modulates its Mg(2+)-dependent channel gating. ATP binding enhances the intracellular domain affinity for Mg(2+) within physiological concentrations of this divalent cation, enabling MgtE to function as an in vivo Mg(2+) sensor. ATP dissociation from MgtE upregulates Mg(2+) influx at both high and low intracellular Mg(2+) concentrations. Its function is as follows. Highly selective magnesium channel that plays an important role in Mg(2+) homeostasis. Functions as a Mg(2+)-dependent gating channel. Exhibits low activity with cobalt, suggesting that it might also be involved in the uptake of Co(2+) as a micronutrient. Also exhibits low activity with Ca(2+), but it shows almost no activity with Mn(2+). In Thermus thermophilus (strain ATCC 27634 / DSM 579 / HB8), this protein is Magnesium transporter MgtE.